Consider the following 52-residue polypeptide: Large ribosomal subunit protein eL39 (52 aa).

It belongs to the eukaryotic ribosomal protein eL39 family.

The protein is Large ribosomal subunit protein eL39 of Caldivirga maquilingensis (strain ATCC 700844 / DSM 13496 / JCM 10307 / IC-167).